The primary structure comprises 1189 residues: Ras-specific guanine nucleotide-releasing factor 2 (1189 aa).

A PH 1 domain is found at glutamate 22–tyrosine 133. Residues lysine 158–arginine 193 adopt a coiled-coil conformation. Positions aspartate 205–cysteine 234 constitute an IQ domain. Positions lysine 243–glutamate 429 constitute a DH domain. A PH 2 domain is found at proline 470 to aspartate 588. An N-terminal Ras-GEF domain is found at lysine 635 to glycine 755. Residues valine 713–proline 738 are disordered. Residues serine 725 and serine 726 each carry the phosphoserine modification. Serine 736 is subject to Phosphoserine; by CDK5. The interval lysine 743 to asparagine 751 is regulates proteasomal degradation. Serine 745 and serine 749 each carry phosphoserine. Positions leucine 757–proline 817 are disordered. Residues serine 762–alanine 776 show a composition bias toward low complexity. A phosphoserine mark is found at serine 801, serine 805, and serine 924. The Ras-GEF domain occupies serine 954–arginine 1186. The tract at residues alanine 1051–lysine 1080 is responsible of the affinity for farnesylated versus geranylgeranylated Ras.

As to quaternary structure, homooligomer and heterooligomer with RASGRF1. Interacts with Ras and RAC1. Interacts in a calcium-dependent manner with calmodulin. Interacts with EPB49 and probably CDK5R1. Interacts with the AMPA receptor through GRIA1. Interacts with microtubules. In terms of processing, phosphorylated by CDK5; down-regulates RASGRF2-mediated RAC1 activation. Post-translationally, ubiquitinated upon interaction with Ras. Ubiquitination leads to degradation through the 26S proteasome. Expressed in brain in the nucleus of the solitary tract. Not observed in the hippocampus (at protein level).

Its subcellular location is the cytoplasm. It is found in the cell membrane. The protein localises to the endoplasmic reticulum membrane. In terms of biological role, functions as a calcium-regulated nucleotide exchange factor activating both Ras and RAC1 through the exchange of bound GDP for GTP. Preferentially activates HRAS in vivo compared to RRAS based on their different types of prenylation. Functions in synaptic plasticity by contributing to the induction of long term potentiation. The chain is Ras-specific guanine nucleotide-releasing factor 2 (Rasgrf2) from Mus musculus (Mouse).